The primary structure comprises 760 residues: Acetyl-CoA decarbonylase/synthase complex subunit alpha 1 (760 aa).

6 residues coordinate [4Fe-4S] cluster: Cys56, Cys59, Cys60, Cys62, Cys67, and Cys77. Residue His100 participates in CO binding. [Ni-4Fe-4S] cluster contacts are provided by His231, Cys259, and Cys298. 2 4Fe-4S ferredoxin-type domains span residues 381 to 410 (KKLQ…VEAM) and 418 to 450 (FEGL…MIED). Residues Cys390, Cys393, Cys396, Cys400, Cys428, Cys431, Cys434, and Cys438 each coordinate [4Fe-4S] cluster. [Ni-4Fe-4S] cluster contacts are provided by Cys496, Cys525, and Cys560.

Belongs to the Ni-containing carbon monoxide dehydrogenase family. In terms of assembly, heterotetramer of two alpha and two epsilon subunits. The ACDS complex is made up of alpha, epsilon, beta, gamma and delta subunits with a probable stoichiometry of (alpha(2)epsilon(2))(4)-beta(8)-(gamma(1)delta(1))(8). [4Fe-4S] cluster is required as a cofactor. [Ni-4Fe-4S] cluster serves as cofactor.

The catalysed reaction is CO + 2 oxidized [2Fe-2S]-[ferredoxin] + H2O = 2 reduced [2Fe-2S]-[ferredoxin] + CO2 + 2 H(+). Part of the ACDS complex that catalyzes the reversible cleavage of acetyl-CoA, allowing autotrophic growth from CO(2). The alpha-epsilon subcomponent functions as a carbon monoxide dehydrogenase. The sequence is that of Acetyl-CoA decarbonylase/synthase complex subunit alpha 1 from Methanopyrus kandleri (strain AV19 / DSM 6324 / JCM 9639 / NBRC 100938).